The chain runs to 166 residues: Regulatory protein RecX (166 aa).

This sequence belongs to the RecX family.

The protein resides in the cytoplasm. In terms of biological role, modulates RecA activity. The sequence is that of Regulatory protein RecX from Salmonella paratyphi A (strain ATCC 9150 / SARB42).